We begin with the raw amino-acid sequence, 617 residues long: Neopullulanase SusA (617 aa).

The N-terminal stretch at 1–22 is a signal peptide; sequence MKRNLLFIILLLLLPGLHQVFA. Ca(2+) contacts are provided by asparagine 138, asparagine 143, aspartate 144, glycine 164, and aspartate 166. Catalysis depends on residues aspartate 331 and glutamate 360.

It belongs to the glycosyl hydrolase 13 family. The cofactor is Ca(2+).

The protein localises to the periplasm. The enzyme catalyses Hydrolysis of pullulan to panose (6-alpha-D-glucosylmaltose).. The protein operates within glycan degradation; starch degradation. Neopullulanase that cleaves 1,4-alpha-glucosidic linkages in starch to produce disaccharides or trisaccharides in starch degradation. This Bacteroides thetaiotaomicron (strain ATCC 29148 / DSM 2079 / JCM 5827 / CCUG 10774 / NCTC 10582 / VPI-5482 / E50) protein is Neopullulanase SusA (susA).